The sequence spans 193 residues: Protein B4 (193 aa).

Helical transmembrane passes span 15-35 (FFVCIFLCVFFCVCIFLCVFF), 36-56 (CVYFFVCVFFCVCFFVCVFFV), and 160-180 (LSLCGSAFCLSFSLARAIVFS).

The protein localises to the host membrane. The chain is Protein B4 (B4) from Homo sapiens (Human).